The sequence spans 184 residues: Guanylate kinase (184 aa).

In terms of domain architecture, Guanylate kinase-like spans 4-182; the sequence is MGLTVLSGPS…AAARLVALMI (179 aa). Residue 11 to 18 coordinates ATP; sequence GPSGVGKD.

The protein belongs to the guanylate kinase family.

The protein resides in the cytoplasm. The enzyme catalyses GMP + ATP = GDP + ADP. Its function is as follows. Essential for recycling GMP and indirectly, cGMP. This chain is Guanylate kinase, found in Frankia casuarinae (strain DSM 45818 / CECT 9043 / HFP020203 / CcI3).